A 147-amino-acid polypeptide reads, in one-letter code: Arginine repressor (147 aa).

Belongs to the ArgR family.

It is found in the cytoplasm. The protein operates within amino-acid biosynthesis; L-arginine biosynthesis [regulation]. Functionally, regulates arginine biosynthesis genes. The sequence is that of Arginine repressor from Chlamydia caviae (strain ATCC VR-813 / DSM 19441 / 03DC25 / GPIC) (Chlamydophila caviae).